Consider the following 1172-residue polypeptide: DNA-directed RNA polymerase subunit beta (1172 aa).

Belongs to the RNA polymerase beta chain family. In terms of assembly, the RNAP catalytic core consists of 2 alpha, 1 beta, 1 beta' and 1 omega subunit. When a sigma factor is associated with the core the holoenzyme is formed, which can initiate transcription.

The enzyme catalyses RNA(n) + a ribonucleoside 5'-triphosphate = RNA(n+1) + diphosphate. DNA-dependent RNA polymerase catalyzes the transcription of DNA into RNA using the four ribonucleoside triphosphates as substrates. The chain is DNA-directed RNA polymerase subunit beta from Pseudothermotoga lettingae (strain ATCC BAA-301 / DSM 14385 / NBRC 107922 / TMO) (Thermotoga lettingae).